The primary structure comprises 299 residues: Urease accessory protein UreD (299 aa).

Belongs to the UreD family. As to quaternary structure, ureD, UreF and UreG form a complex that acts as a GTP-hydrolysis-dependent molecular chaperone, activating the urease apoprotein by helping to assemble the nickel containing metallocenter of UreC. The UreE protein probably delivers the nickel.

It localises to the cytoplasm. Its function is as follows. Required for maturation of urease via the functional incorporation of the urease nickel metallocenter. The chain is Urease accessory protein UreD from Haloarcula marismortui (strain ATCC 43049 / DSM 3752 / JCM 8966 / VKM B-1809) (Halobacterium marismortui).